The chain runs to 331 residues: Probable protein phosphatase 2C 72 (331 aa).

Positions 43–324 constitute a PPM-type phosphatase domain; it reads LGSVCSIQGT…DDITVICLFL (282 aa). Mn(2+) is bound by residues D78, G79, D268, and D315.

Belongs to the PP2C family. Mg(2+) is required as a cofactor. Mn(2+) serves as cofactor.

It carries out the reaction O-phospho-L-seryl-[protein] + H2O = L-seryl-[protein] + phosphate. The enzyme catalyses O-phospho-L-threonyl-[protein] + H2O = L-threonyl-[protein] + phosphate. This chain is Probable protein phosphatase 2C 72, found in Arabidopsis thaliana (Mouse-ear cress).